The primary structure comprises 296 residues: MIKWLCLFFSYILMVSSHSWLGLWLSMEMNSLSFIPIMIEESKENSLKYFLIQSVASVIFLASILNQSFSFLIPFALLIKIGAAPFHMWLVSISKSMSWKVLSLLMTFQKIGPLLGLAMLQFTNSFFIFISAFIGGLGGINQSNLRLIMAFSSVSHLSWLMVNMSSFFLMLVYYVTYLAILYFAVILLQQSGMYSLAQMNSNASLIYKASISFNLLSLAGLPPFLGFFIKWMSLEMNILSPLLVLALVVSSCFSVYFYFSIAMSSLLFPSEVKSKKMEIPGILSMGFNIFLPLFFL.

8 helical membrane passes run 5–25 (LCLF…GLWL), 49–69 (YFLI…NQSF), 71–91 (FLIP…MWLV), 114–134 (LLGL…SAFI), 167–187 (FFLM…AVIL), 209–229 (ASIS…GFFI), 242–262 (LLVL…FSIA), and 276–296 (KMEI…LFFL).

This sequence belongs to the complex I subunit 2 family.

The protein resides in the mitochondrion inner membrane. It catalyses the reaction a ubiquinone + NADH + 5 H(+)(in) = a ubiquinol + NAD(+) + 4 H(+)(out). Functionally, core subunit of the mitochondrial membrane respiratory chain NADH dehydrogenase (Complex I) that is believed to belong to the minimal assembly required for catalysis. Complex I functions in the transfer of electrons from NADH to the respiratory chain. The immediate electron acceptor for the enzyme is believed to be ubiquinone. The sequence is that of NADH-ubiquinone oxidoreductase chain 2 (ND2) from Artemia franciscana (Brine shrimp).